The chain runs to 741 residues: Zinc transporter ZIP6 (741 aa).

An N-terminal signal peptide occupies residues 1 to 20; sequence MATNLSVIMILTFALWVTNP. The Extracellular segment spans residues 21-311; it reads LHELQSTAAF…PKTYSLQIAW (291 aa). Asn68 carries N-linked (GlcNAc...) asparagine glycosylation. Residues 95-111 are compositionally biased toward basic and acidic residues; sequence HDHERHSDHERHSDHER. 2 disordered regions span residues 95-172 and 189-213; these read HDHE…EVTS and ETPK…EKSR. Polar residues predominate over residues 135-147; it reads DNSGKNPNTSQGK. Residue Asn142 is glycosylated (N-linked (GlcNAc...) asparagine). Basic and acidic residues predominate over residues 150 to 162; sequence RPAEHVNGRRNGK. Residues 163 to 172 are compositionally biased toward low complexity; it reads ESASSSEVTS. Residues 200–209 are compositionally biased toward polar residues; it reads INPSTPPSIT. Asn226, Asn251, and Asn268 each carry an N-linked (GlcNAc...) asparagine glycan. A helical membrane pass occupies residues 312-332; it reads LGGFIAISIISFLSLLGVILV. The Cytoplasmic portion of the chain corresponds to 333–341; that stretch reads PLMNRVFFK. A helical membrane pass occupies residues 342 to 362; the sequence is FLLSFLVALAVGTLSGDALLH. The Extracellular segment spans residues 363–409; sequence LLPHSHASHHHSHSHEEPAMEMKRGPLFSHLSAQNLEESSYFDSTWK. A helical transmembrane segment spans residues 410 to 430; that stretch reads GLTALGGLYFMFLVEHVLTLI. At 431 to 643 the chain is on the cytoplasmic side; it reads KQFKDKKKKN…LKAGMTVKQA (213 aa). Residues 434–494 are disordered; that stretch reads KDKKKKNQKK…QEPSPFDSQQ (61 aa). A coiled-coil region spans residues 450–475; the sequence is VESKKQLSKYESQLSTNEEKVDTGER. A phosphoserine mark is found at Ser457 and Ser464. Residues 466 to 477 show a composition bias toward basic and acidic residues; sequence NEEKVDTGERPE. Residues 481–494 show a composition bias toward polar residues; that stretch reads QADSQEPSPFDSQQ. The chain crosses the membrane as a helical span at residues 644–664; sequence VLYNALSAMLAYLGMATGIFI. Topologically, residues 665 to 672 are extracellular; sequence GHYAENVS. Asn670 carries an N-linked (GlcNAc...) asparagine glycan. The chain crosses the membrane as a helical span at residues 673 to 693; it reads MWIFALTAGLFMYVALVDMVP. Residues 694 to 710 are Cytoplasmic-facing; that stretch reads EMLHNDASDHGCSRWGY. A helical membrane pass occupies residues 711 to 731; it reads FFLQNAGILLGFGIMLLISIF. The Extracellular portion of the chain corresponds to 732–741; that stretch reads EHKIVFRINF.

It belongs to the ZIP transporter (TC 2.A.5) family. As to quaternary structure, interacts with SLC39A10; which triggers cells to undergo EMT and mitosis. Found in a complex with SLC39A6, SLC39A10 and with the 'Ser-727' phosphorylated form of STAT3 throughout mitosis. Found in a complex with SLC39A6, SLC39A10 and with NCAM1; this complex controls NCAM1 phosphorylation and integration into focal adhesion complexes during epithelial-to-mesenchymal transition (EMT). Found in a complex with SLC39A6, SLC39A10 and with GSK3B that controls NCAM1 phosphorylation. Cleaved on the N-terminus before locating to the plasma membrane. Post-translationally, N-glycosylated. In terms of processing, phosphorylated by ZAP70 in response to TCR stimulation leading to its activation. In terms of tissue distribution, expressed in the endothelial cells of the brain capillaries.

The protein localises to the cell membrane. It is found in the cell projection. Its subcellular location is the lamellipodium membrane. It localises to the membrane raft. The protein resides in the apical cell membrane. The catalysed reaction is Zn(2+)(in) = Zn(2+)(out). Zinc-influx transporter which plays a role in zinc homeostasis and in the induction of epithelial-to-mesenchymal transition (EMT). When associated with SLC39A10, the heterodimer formed by SLC39A10 and SLC39A6 mediates cellular zinc uptake to trigger cells to undergo epithelial- to-mesenchymal transition (EMT). The SLC39A10-SLC39A6 heterodimer also controls NCAM1 phosphorylation and its integration into focal adhesion complexes during EMT. Zinc influx inactivates GSK3B, enabling unphosphorylated SNAI1 in the nucleus to down-regulate adherence genes such as CDH1, causing loss of cell adherence. In addition, the SLC39A10-SLC39A6 heterodimer plays an essentiel role in initiating mitosis by importing zinc into cells to initiate a pathway resulting in the onset of mitosis. Participates in the T-cell receptor signaling regulation by mediating cellular zinc uptake into activated lymphocytes. Regulates the zinc influx necessary for proper meiotic progression to metaphase II (MII) that allows the oocyte-to-egg transition. In Rattus norvegicus (Rat), this protein is Zinc transporter ZIP6.